We begin with the raw amino-acid sequence, 92 residues long: MTEAAQTEKSLRRTLVGRVVSDKMDKTVTVLVENRVKHPLYGKYVLRSKKYHAHDEANQYKEGDKVEIQEGRPLSRTKSWVVSRLVEAARVI.

Belongs to the universal ribosomal protein uS17 family. In terms of assembly, part of the 30S ribosomal subunit.

Its function is as follows. One of the primary rRNA binding proteins, it binds specifically to the 5'-end of 16S ribosomal RNA. The sequence is that of Small ribosomal subunit protein uS17 from Cupriavidus necator (strain ATCC 17699 / DSM 428 / KCTC 22496 / NCIMB 10442 / H16 / Stanier 337) (Ralstonia eutropha).